Here is a 67-residue protein sequence, read N- to C-terminus: UPF0337 protein CC_0938 (67 aa).

A disordered region spans residues 37–67; sequence AAQKAKGDLQNKVGKAQDKARRRDQALNARL. A compositionally biased stretch (basic and acidic residues) spans 41 to 61; that stretch reads AKGDLQNKVGKAQDKARRRDQ.

This sequence belongs to the UPF0337 (CsbD) family.

This Caulobacter vibrioides (strain ATCC 19089 / CIP 103742 / CB 15) (Caulobacter crescentus) protein is UPF0337 protein CC_0938.